A 493-amino-acid polypeptide reads, in one-letter code: Proline--tRNA ligase (493 aa).

It belongs to the class-II aminoacyl-tRNA synthetase family. ProS type 3 subfamily. As to quaternary structure, homodimer.

Its subcellular location is the cytoplasm. The enzyme catalyses tRNA(Pro) + L-proline + ATP = L-prolyl-tRNA(Pro) + AMP + diphosphate. Functionally, catalyzes the attachment of proline to tRNA(Pro) in a two-step reaction: proline is first activated by ATP to form Pro-AMP and then transferred to the acceptor end of tRNA(Pro). The sequence is that of Proline--tRNA ligase from Porphyromonas gingivalis (strain ATCC BAA-308 / W83).